Here is a 526-residue protein sequence, read N- to C-terminus: Cholesterol side-chain cleavage enzyme, mitochondrial (526 aa).

Residues 1 to 36 constitute a mitochondrion transit peptide; sequence MLAKGLCLRSVLVKSCQPFLSPVWQGPGLATGNGAG. Cys459 lines the heme pocket.

The protein belongs to the cytochrome P450 family. In terms of assembly, interacts with FDX1/adrenodoxin. Heme is required as a cofactor. In terms of tissue distribution, expressed in the kidney where it localizes to the distal convoluted tubule and the thick ascending limb of the loop of Henle (at protein level). In the ovary, highly expressed in interstitial cells (at protein level). Also expressed in adrenal gland and testis.

It localises to the mitochondrion inner membrane. It catalyses the reaction 6 reduced [adrenodoxin] + cholesterol + 3 O2 + 6 H(+) = 4-methylpentanal + pregnenolone + 6 oxidized [adrenodoxin] + 4 H2O. The catalysed reaction is 2 reduced [adrenodoxin] + cholesterol + O2 + 2 H(+) = (22R)-hydroxycholesterol + 2 oxidized [adrenodoxin] + H2O. It carries out the reaction (22R)-hydroxycholesterol + 2 reduced [adrenodoxin] + O2 + 2 H(+) = (20R,22R)-20,22-dihydroxycholesterol + 2 oxidized [adrenodoxin] + H2O. The enzyme catalyses (20R,22R)-20,22-dihydroxycholesterol + 2 reduced [adrenodoxin] + O2 + 2 H(+) = 4-methylpentanal + pregnenolone + 2 oxidized [adrenodoxin] + 2 H2O. Its pathway is lipid metabolism; C21-steroid hormone metabolism. It functions in the pathway steroid metabolism; cholesterol metabolism. In terms of biological role, a cytochrome P450 monooxygenase that catalyzes the side-chain hydroxylation and cleavage of cholesterol to pregnenolone, the precursor of most steroid hormones. Catalyzes three sequential oxidation reactions of cholesterol, namely the hydroxylation at C22 followed with the hydroxylation at C20 to yield 20R,22R-hydroxycholesterol that is further cleaved between C20 and C22 to yield the C21-steroid pregnenolone and 4-methylpentanal. Mechanistically, uses molecular oxygen inserting one oxygen atom into a substrate and reducing the second into a water molecule. Two electrons are provided by NADPH via a two-protein mitochondrial transfer system comprising flavoprotein FDXR (adrenodoxin/ferredoxin reductase) and nonheme iron-sulfur protein FDX1 or FDX2 (adrenodoxin/ferredoxin). This is Cholesterol side-chain cleavage enzyme, mitochondrial from Rattus norvegicus (Rat).